A 467-amino-acid polypeptide reads, in one-letter code: Mitochondrial distribution and morphology protein 10 (467 aa).

The segment at 361-393 (GLPDTAPSRNRECDDLPPPRRDNYHHQRSPHAS) is disordered. The segment covering 369–385 (RNRECDDLPPPRRDNYH) has biased composition (basic and acidic residues).

Belongs to the MDM10 family. As to quaternary structure, component of the ER-mitochondria encounter structure (ERMES) or MDM complex, composed of MMM1, MDM10, MDM12 and MDM34. Associates with the mitochondrial outer membrane sorting assembly machinery SAM(core) complex.

The protein localises to the mitochondrion outer membrane. Functionally, component of the ERMES/MDM complex, which serves as a molecular tether to connect the endoplasmic reticulum and mitochondria. Components of this complex are involved in the control of mitochondrial shape and protein biogenesis and may function in phospholipid exchange. MDM10 is involved in the late assembly steps of the general translocase of the mitochondrial outer membrane (TOM complex). Functions in the TOM40-specific route of the assembly of outer membrane beta-barrel proteins, including the association of TOM40 with the receptor TOM22 and small TOM proteins. Can associate with the SAM(core) complex as well as the MDM12-MMM1 complex, both involved in late steps of the major beta-barrel assembly pathway, that is responsible for biogenesis of all outer membrane beta-barrel proteins. May act as a switch that shuttles between both complexes and channels precursor proteins into the TOM40-specific pathway. Plays a role in mitochondrial morphology and in the inheritance of mitochondria. This is Mitochondrial distribution and morphology protein 10 from Ajellomyces capsulatus (strain NAm1 / WU24) (Darling's disease fungus).